The sequence spans 394 residues: Phosphopentomutase (394 aa).

D13, D286, H291, D327, H328, and H339 together coordinate Mn(2+).

It belongs to the phosphopentomutase family. The cofactor is Mn(2+).

The protein resides in the cytoplasm. It catalyses the reaction 2-deoxy-alpha-D-ribose 1-phosphate = 2-deoxy-D-ribose 5-phosphate. The catalysed reaction is alpha-D-ribose 1-phosphate = D-ribose 5-phosphate. It participates in carbohydrate degradation; 2-deoxy-D-ribose 1-phosphate degradation; D-glyceraldehyde 3-phosphate and acetaldehyde from 2-deoxy-alpha-D-ribose 1-phosphate: step 1/2. Functionally, isomerase that catalyzes the conversion of deoxy-ribose 1-phosphate (dRib-1-P) and ribose 1-phosphate (Rib-1-P) to deoxy-ribose 5-phosphate (dRib-5-P) and ribose 5-phosphate (Rib-5-P), respectively. This is Phosphopentomutase from Bacillus cereus (strain G9842).